A 299-amino-acid chain; its full sequence is HTH-type transcriptional regulator CynR (299 aa).

Residues 1–58 (MLSRHINYFLAVAEHGSFTRAASALHVSQPALSQQIRQLEESLGVPLFDRSGRTIRLT) enclose the HTH lysR-type domain. Residues 18–37 (FTRAASALHVSQPALSQQIR) constitute a DNA-binding region (H-T-H motif).

The protein belongs to the LysR transcriptional regulatory family.

Its subcellular location is the cytoplasm. Positively regulates the cynTSX operon, and negatively regulates its own transcription. Binds specifically to the cynR-cynTSX intergenic region. In Escherichia coli (strain K12), this protein is HTH-type transcriptional regulator CynR (cynR).